A 198-amino-acid chain; its full sequence is COMM domain-containing protein 9 (198 aa).

Residue Ala2 is modified to N-acetylalanine. The COMM domain maps to 122-196; it reads RLVDLDWRVD…RIRDQLSAVA (75 aa).

Belongs to the COMM domain-containing protein 9 family. In terms of assembly, component of the commander complex consisting of the CCC subcomplex and the retriever subcomplex. Component of the CCC (COMMD/CCDC22/CCDC93) subcomplex consisting of COMMD1, COMMD2, COMMD3, COMMD4, COMMD5, COMMD6, COMMD7, COMMD8, COMMD9, COMMD10, CCDC22 and CCDC93; within the complex forms a heterodimer with COMMD7. Interacts with RELB and NFKB1/p105. Interacts with CCDC22, CCDC93, SCNN1B, CUL1. As to expression, ubiquitous.

It is found in the nucleus. It localises to the cytoplasmic vesicle. Its function is as follows. Scaffold protein in the commander complex that is essential for endosomal recycling of transmembrane cargos; the commander complex is composed of the CCC subcomplex and the retriever subcomplex. May modulate activity of cullin-RING E3 ubiquitin ligase (CRL) complexes. May down-regulate activation of NF-kappa-B. Modulates Na(+) transport in epithelial cells by regulation of apical cell surface expression of amiloride-sensitive sodium channel (ENaC) subunits. This chain is COMM domain-containing protein 9 (COMMD9), found in Homo sapiens (Human).